The sequence spans 210 residues: Probable septum site-determining protein MinC (210 aa).

The protein belongs to the MinC family. As to quaternary structure, interacts with MinD and FtsZ.

Its function is as follows. Cell division inhibitor that blocks the formation of polar Z ring septums. Rapidly oscillates between the poles of the cell to destabilize FtsZ filaments that have formed before they mature into polar Z rings. Prevents FtsZ polymerization. The chain is Probable septum site-determining protein MinC from Thermotoga petrophila (strain ATCC BAA-488 / DSM 13995 / JCM 10881 / RKU-1).